We begin with the raw amino-acid sequence, 374 residues long: (R)-phenyllactyl-CoA dehydratase beta subunit (374 aa).

This sequence belongs to the FldB/FldC dehydratase alpha/beta subunit family. As to quaternary structure, part of the heterotrimeric phenyllactate dehydratase complex FldABC, composed of (R)-phenyllactate CoA-transferase (FldA) and a heterodimeric (R)-phenyllactyl-CoA dehydratase (FldB and FldC). [4Fe-4S] cluster serves as cofactor. No flavin could be detected in the FldABC complex, and the addition of FAD, FMN or riboflavin to the dehydratase do not increase enzymatic activity. is required as a cofactor.

The enzyme catalyses (R)-3-phenyllactoyl-CoA = (E)-cinnamoyl-CoA + H2O. It carries out the reaction (R)-3-(4-hydroxyphenyl)lactoyl-CoA = (E)-4-coumaroyl-CoA + H2O. It catalyses the reaction (R)-3-(indol-3-yl)lactoyl-CoA = (E)-3-(indol-3-yl)acryloyl-CoA + H2O. It functions in the pathway amino-acid degradation; L-phenylalanine degradation. Functionally, component of the phenyllactate dehydratase complex FldABC that is involved in the fermentation of L-phenylalanine via a Stickland reaction. This complex catalyzes the reversible syn-dehydration of (R)-phenyllactate to (E)-cinnamate in two steps, a CoA-transfer from cinnamoyl-CoA to phenyllactate, catalyzed by FldA, followed by the dehydration of phenyllactyl-CoA to cinnamoyl-CoA, catalyzed by FldB and FldC. Requires the activator FldI to initiate catalysis. The sequence is that of (R)-phenyllactyl-CoA dehydratase beta subunit from Clostridium sporogenes.